Consider the following 475-residue polypeptide: MNLFFEKTEATNVAEFSVSEIAGALKRVVEERFGYVRVRGEISGYRGAHASGHVYFSLKDDKARLEAVIWRGIMEKLKFPPEEGMEVIAVGKLTTYPGSSKYQIVIEALEPTGVGALMTLLENRKKKLADEGLFDEAKKKPLPYMPRIIGVVTSPTGAVIRDIIHRISDRFPLHILVWPVRVQGDTSGREVADALKGFNALPFGGLVPKPDLIIVARGGGSLEDLWGFNDEAVVRAVYESALPVISAVGHETDWTLIDYVADWRAPTPTGAAERAVPVKLDLEVQVASLGARLRMGLARYFDFHQQKLRALVRGLPTVDQLFALPRRGFDEISSRLQRALCVSCDKKRFYFHGLNLRLSPRLLNTEKELRNTKEYTARLHRAFVRNVEKQRAQLEVASRLLKSTSYQNILERGFVLALGPDNKLIKRLVQFPETGQINLRFFDGEMSVSARDHGLNRSSKSKRIKSKQDDQGTLF.

Positions 452–475 are disordered; the sequence is DHGLNRSSKSKRIKSKQDDQGTLF. Over residues 466-475 the composition is skewed to basic and acidic residues; it reads SKQDDQGTLF.

The protein belongs to the XseA family. In terms of assembly, heterooligomer composed of large and small subunits.

It is found in the cytoplasm. The catalysed reaction is Exonucleolytic cleavage in either 5'- to 3'- or 3'- to 5'-direction to yield nucleoside 5'-phosphates.. Its function is as follows. Bidirectionally degrades single-stranded DNA into large acid-insoluble oligonucleotides, which are then degraded further into small acid-soluble oligonucleotides. This is Exodeoxyribonuclease 7 large subunit from Bartonella quintana (strain Toulouse) (Rochalimaea quintana).